The chain runs to 149 residues: Large ribosomal subunit protein bL9 (149 aa).

Belongs to the bacterial ribosomal protein bL9 family.

Functionally, binds to the 23S rRNA. The polypeptide is Large ribosomal subunit protein bL9 (Legionella pneumophila (strain Paris)).